We begin with the raw amino-acid sequence, 95 residues long: Glutamine synthetase and cystathionine beta-lyase binding protein (95 aa).

In terms of assembly, interacts with glutamine synthetase (TTHA1329) and cystathionine beta-lyase (TTHA1620), but proteins do not form a ternary complex.

Functionally, binds to glutamine synthetase and cystathionine beta-lyase. May be utilized for the efficient use of nitrogen in the global nitrogen regulation of T.thermophilus. The polypeptide is Glutamine synthetase and cystathionine beta-lyase binding protein (Thermus thermophilus (strain ATCC 27634 / DSM 579 / HB8)).